Here is a 356-residue protein sequence, read N- to C-terminus: 3-isopropylmalate dehydrogenase (356 aa).

4 residues coordinate substrate: Arg-90, Arg-100, Arg-128, and Asp-222. Residues Asp-222, Asp-246, and Asp-250 each coordinate Mg(2+). 280 to 292 (GSAPDIAGKGVAN) serves as a coordination point for NAD(+).

Belongs to the isocitrate and isopropylmalate dehydrogenases family. LeuB type 1 subfamily. As to quaternary structure, homodimer. Mg(2+) serves as cofactor. Mn(2+) is required as a cofactor.

The protein resides in the cytoplasm. The enzyme catalyses (2R,3S)-3-isopropylmalate + NAD(+) = 4-methyl-2-oxopentanoate + CO2 + NADH. Its pathway is amino-acid biosynthesis; L-leucine biosynthesis; L-leucine from 3-methyl-2-oxobutanoate: step 3/4. Catalyzes the oxidation of 3-carboxy-2-hydroxy-4-methylpentanoate (3-isopropylmalate) to 3-carboxy-4-methyl-2-oxopentanoate. The product decarboxylates to 4-methyl-2 oxopentanoate. The chain is 3-isopropylmalate dehydrogenase from Albidiferax ferrireducens (strain ATCC BAA-621 / DSM 15236 / T118) (Rhodoferax ferrireducens).